Reading from the N-terminus, the 647-residue chain is MGKIRKLDDQLSNLIAAGEVVERPASVVKELVENSIDANSTSIEIHLEEAGLSKIRIIDNGDGIAEEDCIVAFERHATSKIKDENDLFRIRTLGFRGEALPSIASVSELELITSTGDAPGTHLIIKGGDIIKQEKTASRKGTDITVQNLFFNTPARLKYMKTIHTELGNITDIVYRIAMSHPEVSLKLFHNEKKLLHTSGNGDVRQVLASIYSIQVAKKLVPIEAESLDFTIKGYVTLPEVTRASRNYMSTIVNGRYVRNFVLMKAIQQGYHTLLPVGRYPIGFLSIEMDPMLVDVNVHPAKLEVRFSKEQELLKLIEETLQAAFKKIQLIPDAGVTTKKKEKDESVQEQFKFEHAKPKEPSMPEIVLPTGMDEKQEEPQAVKQPAQLWQPPKQEWQPPQSLVREEQSWQPSTKSIIEEPIREEKSWNSNDEDFELEELEEEVQEIEEIEMNGNDLPPLYPIGQMHGTYIFAQNDKGLYMIDQHAAQERINYEYFRDKVGRVAQEVQELLVPYRIDLSLTEFLRVEEQLEELKKVGLFLEQFGHQSFIVRSHPTWFPKGQETEIIDEMMEQVVKLKKVDIKKLREEAAIMMSCKASIKANQYLTNDQIFALLEELRTTTNPYTCPHGRPILVHHSTYELEKMFKRVM.

It belongs to the DNA mismatch repair MutL/HexB family.

This protein is involved in the repair of mismatches in DNA. It is required for dam-dependent methyl-directed DNA mismatch repair. May act as a 'molecular matchmaker', a protein that promotes the formation of a stable complex between two or more DNA-binding proteins in an ATP-dependent manner without itself being part of a final effector complex. This is DNA mismatch repair protein MutL from Bacillus cereus (strain Q1).